Reading from the N-terminus, the 287-residue chain is Mu-like prophage FluMu DNA transposition protein B (287 aa).

The 56-residue stretch at 7 to 62 folds into the HTH cro/C1-type domain; it reads LKQHLSDSQITQAQLAREAGVNAGALSAYLNDNYKGNIADVEAKLAAYLEKKAVQA. A DNA-binding region (H-T-H motif) is located at residues 18 to 37; sequence QAQLAREAGVNAGALSAYLN. An ATP-binding site is contributed by 98–105; sequence GMSGVGKT.

Its function is as follows. This protein is a non-specific DNA-binding and ATP-hydrolyzing protein essential for bacteriophage integration and replication. The polypeptide is Mu-like prophage FluMu DNA transposition protein B (Haemophilus influenzae (strain ATCC 51907 / DSM 11121 / KW20 / Rd)).